The chain runs to 493 residues: Bifunctional protein GlmU (493 aa).

A pyrophosphorylase region spans residues 1–246 (MTGELDVDGE…SWLVAGINDR (246 aa)). UDP-N-acetyl-alpha-D-glucosamine-binding positions include 21 to 24 (LAAG), Lys-35, Gln-88, 93 to 94 (GT), 117 to 119 (SGD), Gly-156, Glu-171, Asn-186, and Asn-244. Residue Asp-119 participates in Mg(2+) binding. Asn-244 contacts Mg(2+). Positions 247–267 (VQLTAAATELNARIIRRWQLA) are linker. The N-acetyltransferase stretch occupies residues 268 to 493 (GVTIHDPRTT…DGPADDASDA (226 aa)). UDP-N-acetyl-alpha-D-glucosamine contacts are provided by Arg-349 and Lys-367. Residue His-379 is the Proton acceptor of the active site. UDP-N-acetyl-alpha-D-glucosamine is bound by residues Tyr-382 and Asn-393. Residues Ala-396, 402–403 (NY), Ser-421, and Ala-439 contribute to the acetyl-CoA site. Residues 470-493 (RPGTPEARAAVEAADGPADDASDA) form a disordered region.

The protein in the N-terminal section; belongs to the N-acetylglucosamine-1-phosphate uridyltransferase family. It in the C-terminal section; belongs to the transferase hexapeptide repeat family. Homotrimer. It depends on Mg(2+) as a cofactor.

It localises to the cytoplasm. It catalyses the reaction alpha-D-glucosamine 1-phosphate + acetyl-CoA = N-acetyl-alpha-D-glucosamine 1-phosphate + CoA + H(+). The catalysed reaction is N-acetyl-alpha-D-glucosamine 1-phosphate + UTP + H(+) = UDP-N-acetyl-alpha-D-glucosamine + diphosphate. Its pathway is nucleotide-sugar biosynthesis; UDP-N-acetyl-alpha-D-glucosamine biosynthesis; N-acetyl-alpha-D-glucosamine 1-phosphate from alpha-D-glucosamine 6-phosphate (route II): step 2/2. The protein operates within nucleotide-sugar biosynthesis; UDP-N-acetyl-alpha-D-glucosamine biosynthesis; UDP-N-acetyl-alpha-D-glucosamine from N-acetyl-alpha-D-glucosamine 1-phosphate: step 1/1. It functions in the pathway bacterial outer membrane biogenesis; LPS lipid A biosynthesis. Its function is as follows. Catalyzes the last two sequential reactions in the de novo biosynthetic pathway for UDP-N-acetylglucosamine (UDP-GlcNAc). The C-terminal domain catalyzes the transfer of acetyl group from acetyl coenzyme A to glucosamine-1-phosphate (GlcN-1-P) to produce N-acetylglucosamine-1-phosphate (GlcNAc-1-P), which is converted into UDP-GlcNAc by the transfer of uridine 5-monophosphate (from uridine 5-triphosphate), a reaction catalyzed by the N-terminal domain. The protein is Bifunctional protein GlmU of Clavibacter sepedonicus (Clavibacter michiganensis subsp. sepedonicus).